We begin with the raw amino-acid sequence, 445 residues long: Maltoporin (445 aa).

A signal peptide spans 1 to 25 (MKMKAKWLPIAAGVTAALASQAAFA).

Belongs to the porin LamB (TC 1.B.3) family. Homotrimer formed of three 18-stranded antiparallel beta-barrels, containing three independent channels.

The protein localises to the cell outer membrane. It carries out the reaction beta-maltose(in) = beta-maltose(out). Its function is as follows. Involved in the transport of maltose and maltodextrins. The chain is Maltoporin from Aeromonas salmonicida.